The sequence spans 144 residues: 3-hydroxyacyl-[acyl-carrier-protein] dehydratase FabZ (144 aa).

Residue His-51 is part of the active site.

The protein belongs to the thioester dehydratase family. FabZ subfamily.

The protein localises to the cytoplasm. It catalyses the reaction a (3R)-hydroxyacyl-[ACP] = a (2E)-enoyl-[ACP] + H2O. Its function is as follows. Involved in unsaturated fatty acids biosynthesis. Catalyzes the dehydration of short chain beta-hydroxyacyl-ACPs and long chain saturated and unsaturated beta-hydroxyacyl-ACPs. The polypeptide is 3-hydroxyacyl-[acyl-carrier-protein] dehydratase FabZ (Lactococcus lactis subsp. cremoris (strain MG1363)).